A 283-amino-acid polypeptide reads, in one-letter code: Polyprenyl-phosphate transporter (283 aa).

9 consecutive transmembrane segments (helical) span residues G27 to F47, F51 to S71, I85 to I105, F112 to L132, T148 to P168, G169 to I189, F197 to S217, L230 to G250, and I255 to L275.

Belongs to the PopT family.

The protein localises to the cell membrane. Its activity is regulated as follows. Active in alkaline conditions. Flippase that catalyzes the transport of undecaprenyl phosphate (UndP) across the cytoplasmic membrane, from the external side to the cytoplasmic side. Is involved in UndP recycling during peptidoglycan synthesis. Necessary for peptidoglycan maintenance. This Staphylococcus aureus (strain NCTC 8325 / PS 47) protein is Polyprenyl-phosphate transporter.